Here is a 175-residue protein sequence, read N- to C-terminus: Translation initiation factor IF-3 (175 aa).

It belongs to the IF-3 family. As to quaternary structure, monomer.

Its subcellular location is the cytoplasm. Its function is as follows. IF-3 binds to the 30S ribosomal subunit and shifts the equilibrium between 70S ribosomes and their 50S and 30S subunits in favor of the free subunits, thus enhancing the availability of 30S subunits on which protein synthesis initiation begins. This chain is Translation initiation factor IF-3, found in Staphylococcus saprophyticus subsp. saprophyticus (strain ATCC 15305 / DSM 20229 / NCIMB 8711 / NCTC 7292 / S-41).